We begin with the raw amino-acid sequence, 75 residues long: SPbeta prophage-derived uncharacterized protein YorX (75 aa).

This Bacillus subtilis (strain 168) protein is SPbeta prophage-derived uncharacterized protein YorX (yorX).